Consider the following 114-residue polypeptide: UPF0212 protein UNCMA_00570 (114 aa).

This sequence belongs to the UPF0212 family.

In Methanocella arvoryzae (strain DSM 22066 / NBRC 105507 / MRE50), this protein is UPF0212 protein UNCMA_00570.